Reading from the N-terminus, the 175-residue chain is Nucleoside-triphosphatase THEP1 (175 aa).

ATP is bound by residues 15–22 and 106–113; these read GNPGVGKT and VLAIDEIG.

The protein belongs to the THEP1 NTPase family.

It carries out the reaction a ribonucleoside 5'-triphosphate + H2O = a ribonucleoside 5'-diphosphate + phosphate + H(+). In terms of biological role, has nucleotide phosphatase activity towards ATP, GTP, CTP, TTP and UTP. May hydrolyze nucleoside diphosphates with lower efficiency. This is Nucleoside-triphosphatase THEP1 from Saccharolobus solfataricus (strain ATCC 35092 / DSM 1617 / JCM 11322 / P2) (Sulfolobus solfataricus).